We begin with the raw amino-acid sequence, 1938 residues long: Myosin-6 (1938 aa).

Positions 31–80 constitute a Myosin N-terminal SH3-like domain; sequence DIRTECFVPDDKEEYVKAKIVSREGGKVTAETENGKTVTVKEDQVMQQNP. A Myosin motor domain is found at 84–779; it reads DKIEDMAMLT…LLGLLEEMRD (696 aa). N6,N6,N6-trimethyllysine is present on Lys128. Residue 177 to 184 participates in ATP binding; it reads GESGAGKT. Thr378 is subject to Phosphothreonine. Phosphoserine is present on Ser416. Actin-binding stretches follow at residues 656 to 678 and 758 to 772; these read LNKL…IPNE and KFGH…GLLG. In terms of domain architecture, IQ spans 782-811; sequence LSRIITRIQAQARGQLMRIEFKKMVERRDA. Calmodulin-binding stretches follow at residues 789–806 and 815–832; these read IQAQ…KKMV and IQWN…PWMK. A coiled-coil region spans residues 842–1938; it reads KSAETEKEMA…GAKQKMHDEE (1097 aa). 2 positions are modified to phosphoserine: Ser1089 and Ser1138. Tyr1260 is modified (phosphotyrosine). Ser1270 carries the phosphoserine modification. A phosphothreonine mark is found at Thr1276 and Thr1283. A Phosphoserine modification is found at Ser1308. The residue at position 1309 (Tyr1309) is a Phosphotyrosine. A Phosphothreonine modification is found at Thr1310. At Ser1511 the chain carries Phosphoserine. Phosphothreonine is present on residues Thr1514 and Thr1680. The interval 1907-1938 is disordered; the sequence is AEERADIAESQVNKLRAKSRDIGAKQKMHDEE. Positions 1924–1938 are enriched in basic and acidic residues; it reads KSRDIGAKQKMHDEE.

Belongs to the TRAFAC class myosin-kinesin ATPase superfamily. Myosin family. As to quaternary structure, muscle myosin is a hexameric protein that consists of 2 heavy chain subunits (MHC), 2 alkali light chain subunits (MLC) and 2 regulatory light chain subunits (MLC-2).

The protein resides in the cytoplasm. Its subcellular location is the myofibril. Muscle contraction. The sequence is that of Myosin-6 (Myh6) from Rattus norvegicus (Rat).